A 377-amino-acid chain; its full sequence is Cytochrome b (377 aa).

The next 4 helical transmembrane spans lie at Phe-34–Met-54, Trp-78–Ala-100, Thr-113–Val-133, and Phe-179–Leu-199. Heme b is bound by residues His-84 and His-98. Residues His-183 and His-197 each coordinate heme b. Residue His-202 coordinates a ubiquinone. The next 4 membrane-spanning stretches (helical) occupy residues Phe-225 to Leu-245, Lys-288 to Tyr-308, Met-323 to Ile-343, and Gln-352 to Trp-372.

Belongs to the cytochrome b family. As to quaternary structure, the main subunits of complex b-c1 are: cytochrome b, cytochrome c1 and the Rieske protein. The cofactor is heme b.

It is found in the mitochondrion inner membrane. In terms of biological role, component of the ubiquinol-cytochrome c reductase complex (complex III or cytochrome b-c1 complex) that is part of the mitochondrial respiratory chain. The b-c1 complex mediates electron transfer from ubiquinol to cytochrome c. Contributes to the generation of a proton gradient across the mitochondrial membrane that is then used for ATP synthesis. This Priapulus caudatus (Priapulid worm) protein is Cytochrome b (mt:Cyt-b).